A 141-amino-acid chain; its full sequence is Hemoglobin subunit alpha (141 aa).

A Globin domain is found at 1-141 (VLSAKDKTNI…VSTVLTSKYR (141 aa)). Residue serine 3 is modified to Phosphoserine. N6-succinyllysine is present on lysine 7. Threonine 8 bears the Phosphothreonine mark. Lysine 16 bears the N6-acetyllysine; alternate mark. The residue at position 16 (lysine 16) is an N6-succinyllysine; alternate. Tyrosine 24 bears the Phosphotyrosine mark. The residue at position 40 (lysine 40) is an N6-succinyllysine. Serine 49 carries the post-translational modification Phosphoserine. O2 is bound at residue histidine 58. Histidine 87 lines the heme b pocket. At serine 102 the chain carries Phosphoserine. Threonine 108 carries the post-translational modification Phosphothreonine. A phosphoserine mark is found at serine 124 and serine 131. Threonine 134 and threonine 137 each carry phosphothreonine. Serine 138 carries the post-translational modification Phosphoserine.

The protein belongs to the globin family. Heterotetramer of two alpha chains and two beta chains. In terms of tissue distribution, red blood cells.

Functionally, involved in oxygen transport from the lung to the various peripheral tissues. Its function is as follows. Hemopressin acts as an antagonist peptide of the cannabinoid receptor CNR1. Hemopressin-binding efficiently blocks cannabinoid receptor CNR1 and subsequent signaling. The polypeptide is Hemoglobin subunit alpha (HBA) (Mesocricetus auratus (Golden hamster)).